The primary structure comprises 84 residues: U4-theraphotoxin-Hhn1ac (84 aa).

Positions 1–22 (MKVTLIAILTCAAVLVLHTTAA) are cleaved as a signal peptide. The propeptide occupies 23 to 47 (EELEESQLMEVGMPDTELAAVDEER). Intrachain disulfides connect Cys51–Cys65, Cys55–Cys76, and Cys70–Cys81.

Belongs to the neurotoxin 12 (Hwtx-2) family. 02 (Hwtx-2) subfamily. In terms of tissue distribution, expressed by the venom gland.

Its subcellular location is the secreted. Postsynaptic neurotoxin. The protein is U4-theraphotoxin-Hhn1ac of Cyriopagopus hainanus (Chinese bird spider).